A 1240-amino-acid chain; its full sequence is Neurofascin (1240 aa).

Residues 1–24 (MARQQAPPWVHIALILFLLSLGGA) form the signal peptide. Residues 25–1110 (IEIPMDPSIQ…NQADIATQGW (1086 aa)) lie on the Extracellular side of the membrane. Ig-like C2-type domains follow at residues 41–137 (PTIT…LQVS), 143–230 (PKEN…NPFT), 244–332 (PSFM…ISVR), 337–424 (PYWL…AFVS), 430–517 (PRML…VRLE), and 521–603 (PTRI…QDLA). Intrachain disulfides connect Cys-63/Cys-118, Cys-162/Cys-213, Cys-268/Cys-316, and Cys-358/Cys-408. An N-linked (GlcNAc...) asparagine glycan is attached at Asn-305. 2 N-linked (GlcNAc...) asparagine glycosylation sites follow: Asn-409 and Asn-446. 2 cysteine pairs are disulfide-bonded: Cys-452-Cys-501 and Cys-543-Cys-592. The residue at position 481 (Tyr-481) is a Phosphotyrosine. An N-linked (GlcNAc...) asparagine glycan is attached at Asn-483. Ser-485 is subject to Phosphoserine. Fibronectin type-III domains follow at residues 630–725 (RPRD…TSGA), 727–823 (PESN…SGED), 827–923 (APRR…PNEA), and 1007–1099 (APDE…TAYT). The tract at residues 710-740 (SSHPSLPSERYRTSGAPPESNPSDVKGEGTR) is disordered. Asn-752, Asn-778, Asn-866, and Asn-881 each carry an N-linked (GlcNAc...) asparagine glycan. The segment at 902–942 (ARTQVGSGEAATEESPAPPNEATPTAAPPTLPPTTVGTTGL) is disordered. Residues 907–916 (GSGEAATEES) show a composition bias toward low complexity. Pro residues predominate over residues 917–933 (PAPPNEATPTAAPPTLP). A helical membrane pass occupies residues 1111 to 1131 (FIGLMCAIALLVLILLIVCFI). Residues 1132–1240 (KRSRGGKYPV…SPVNAIYSLA (109 aa)) are Cytoplasmic-facing. The tract at residues 1141–1240 (VREKKDVPLG…SPVNAIYSLA (100 aa)) is disordered. Acidic residues predominate over residues 1154–1165 (PKEEDGSFDYSD). 7 positions are modified to phosphoserine: Ser-1160, Ser-1174, Ser-1187, Ser-1190, Ser-1226, Ser-1227, and Ser-1231. Polar residues predominate over residues 1171-1184 (LQGSQTSLDGTIKQ).

Belongs to the immunoglobulin superfamily. L1/neurofascin/NgCAM family. In terms of assembly, horseshoe-shaped homodimer. Probable constituent of a NFASC/NRCAM/ankyrin-G complex. Associates with the sodium channel beta-1 (SCN1B) and beta-3 (SCN3B) subunits. Interacts with GLDN/gliomedin. Interacts with MYOC.

The protein resides in the cell membrane. Its function is as follows. Cell adhesion, ankyrin-binding protein which may be involved in neurite extension, axonal guidance, synaptogenesis, myelination and neuron-glial cell interactions. This Mus musculus (Mouse) protein is Neurofascin (Nfasc).